A 238-amino-acid polypeptide reads, in one-letter code: Ribosomal RNA small subunit methyltransferase G (238 aa).

S-adenosyl-L-methionine-binding positions include G77, F82, 128–129, and R147; that span reads AE.

Belongs to the methyltransferase superfamily. RNA methyltransferase RsmG family.

It localises to the cytoplasm. Specifically methylates the N7 position of guanine in position 535 of 16S rRNA. The protein is Ribosomal RNA small subunit methyltransferase G of Exiguobacterium sp. (strain ATCC BAA-1283 / AT1b).